We begin with the raw amino-acid sequence, 489 residues long: Rhamnulokinase (489 aa).

An ATP-binding site is contributed by 13-17 (ASSGR). The cysteines at positions 68 and 222 are disulfide-linked. Substrate contacts are provided by residues G83 and 236-238 (HDT). D237 serves as the catalytic Proton acceptor. An ATP-binding site is contributed by T259. N296 lines the substrate pocket. Q304 contacts ATP. Residues C353 and C370 are joined by a disulfide bond. ATP is bound at residue G402. A disulfide bridge links C413 with C417.

It belongs to the rhamnulokinase family. It depends on Mg(2+) as a cofactor.

It carries out the reaction L-rhamnulose + ATP = L-rhamnulose 1-phosphate + ADP + H(+). It functions in the pathway carbohydrate degradation; L-rhamnose degradation; glycerone phosphate from L-rhamnose: step 2/3. Functionally, involved in the catabolism of L-rhamnose (6-deoxy-L-mannose). Catalyzes the transfer of the gamma-phosphate group from ATP to the 1-hydroxyl group of L-rhamnulose to yield L-rhamnulose 1-phosphate. The sequence is that of Rhamnulokinase from Salmonella agona (strain SL483).